The sequence spans 799 residues: Lon protease (799 aa).

The Lon N-terminal domain occupies 7–200; sequence LPVLPLRDIV…KVFALMEGEI (194 aa). 352 to 359 contributes to the ATP binding site; sequence GPPGVGKT. The region spanning 587-768 is the Lon proteolytic domain; the sequence is VDQVGIVTGL…DEVLKHALTG (182 aa). Active-site residues include Ser674 and Lys717. The tract at residues 772–799 is disordered; sequence PVEWNEAEEPITTSAKKDDGDSDAMLTH.

Belongs to the peptidase S16 family. In terms of assembly, homohexamer. Organized in a ring with a central cavity.

It localises to the cytoplasm. The catalysed reaction is Hydrolysis of proteins in presence of ATP.. In terms of biological role, ATP-dependent serine protease that mediates the selective degradation of mutant and abnormal proteins as well as certain short-lived regulatory proteins. Required for cellular homeostasis and for survival from DNA damage and developmental changes induced by stress. Degrades polypeptides processively to yield small peptide fragments that are 5 to 10 amino acids long. Binds to DNA in a double-stranded, site-specific manner. CcrM is an important target of the Lon protease pathway in C.crescentus. The sequence is that of Lon protease from Caulobacter vibrioides (strain ATCC 19089 / CIP 103742 / CB 15) (Caulobacter crescentus).